The sequence spans 461 residues: Cysteine--tRNA ligase (461 aa).

Cys30 contributes to the Zn(2+) binding site. Residues 32-42 carry the 'HIGH' region motif; the sequence is VTVYDLCHIGH. Residues Cys211, His236, and Glu240 each contribute to the Zn(2+) site. Positions 268–272 match the 'KMSKS' region motif; the sequence is KMSKS. Residue Lys271 participates in ATP binding.

The protein belongs to the class-I aminoacyl-tRNA synthetase family. As to quaternary structure, monomer. Requires Zn(2+) as cofactor.

The protein localises to the cytoplasm. It catalyses the reaction tRNA(Cys) + L-cysteine + ATP = L-cysteinyl-tRNA(Cys) + AMP + diphosphate. This Shewanella sp. (strain MR-7) protein is Cysteine--tRNA ligase.